The sequence spans 483 residues: Bifunctional protein HldE (483 aa).

The segment at 1–327 is ribokinase; the sequence is MDDALAHLPR…ACASSAQGEP (327 aa). 201–204 is a binding site for ATP; sequence NRKE. The active site involves Asp272. The interval 354–483 is cytidylyltransferase; that stretch reads FTNGCFDLLH…TTNLIARMNS (130 aa).

The protein in the N-terminal section; belongs to the carbohydrate kinase PfkB family. This sequence in the C-terminal section; belongs to the cytidylyltransferase family. As to quaternary structure, homodimer.

The catalysed reaction is D-glycero-beta-D-manno-heptose 7-phosphate + ATP = D-glycero-beta-D-manno-heptose 1,7-bisphosphate + ADP + H(+). It catalyses the reaction D-glycero-beta-D-manno-heptose 1-phosphate + ATP + H(+) = ADP-D-glycero-beta-D-manno-heptose + diphosphate. It functions in the pathway nucleotide-sugar biosynthesis; ADP-L-glycero-beta-D-manno-heptose biosynthesis; ADP-L-glycero-beta-D-manno-heptose from D-glycero-beta-D-manno-heptose 7-phosphate: step 1/4. It participates in nucleotide-sugar biosynthesis; ADP-L-glycero-beta-D-manno-heptose biosynthesis; ADP-L-glycero-beta-D-manno-heptose from D-glycero-beta-D-manno-heptose 7-phosphate: step 3/4. Its function is as follows. Catalyzes the phosphorylation of D-glycero-D-manno-heptose 7-phosphate at the C-1 position to selectively form D-glycero-beta-D-manno-heptose-1,7-bisphosphate. In terms of biological role, catalyzes the ADP transfer from ATP to D-glycero-beta-D-manno-heptose 1-phosphate, yielding ADP-D-glycero-beta-D-manno-heptose. The chain is Bifunctional protein HldE from Caulobacter vibrioides (strain ATCC 19089 / CIP 103742 / CB 15) (Caulobacter crescentus).